A 275-amino-acid polypeptide reads, in one-letter code: MGIRFLKAFTPGTRNRSVSDFSEITTTKREKSLSKMNHRSKGRNNRGVITCRHKGGGHKRLYREIDFRRDKIGIPGKVMTIEYDPNRNARIALVMYEDGEKRYILQPNGLRVGDSIISDLQAPILVGNALPLRNIPLGAQVHNVEFQPGSGGQLARSAGALLDILAKEGNFVTVRLPSKEIRLISKNSWATIGQVGNLEAYSIRIGKAGRNRWLGKRPTVRGSVMNPNDHPHGGGEGRAPIGRCRPVTPWGRPALGQFTRQPKKYSSKFILRKRK.

Disordered stretches follow at residues 32-53 (SLSK…TCRH) and 218-242 (PTVR…APIG).

It belongs to the universal ribosomal protein uL2 family. As to quaternary structure, part of the 50S ribosomal subunit.

It localises to the plastid. The protein resides in the chloroplast. This is Large ribosomal subunit protein uL2c (rpl2) from Tetradesmus obliquus (Green alga).